Here is a 279-residue protein sequence, read N- to C-terminus: Diaminopimelate epimerase (279 aa).

Substrate contacts are provided by N12, Q45, and N65. C74 (proton donor) is an active-site residue. Residues 75-76 (GN), N162, N195, and 213-214 (ER) each bind substrate. C222 acts as the Proton acceptor in catalysis. 223 to 224 (GT) contributes to the substrate binding site.

The protein belongs to the diaminopimelate epimerase family. Homodimer.

It localises to the cytoplasm. It carries out the reaction (2S,6S)-2,6-diaminopimelate = meso-2,6-diaminopimelate. It participates in amino-acid biosynthesis; L-lysine biosynthesis via DAP pathway; DL-2,6-diaminopimelate from LL-2,6-diaminopimelate: step 1/1. Its function is as follows. Catalyzes the stereoinversion of LL-2,6-diaminopimelate (L,L-DAP) to meso-diaminopimelate (meso-DAP), a precursor of L-lysine and an essential component of the bacterial peptidoglycan. The polypeptide is Diaminopimelate epimerase (Shewanella woodyi (strain ATCC 51908 / MS32)).